A 190-amino-acid polypeptide reads, in one-letter code: Zinc finger C2H2 protein ECU03_0790 (190 aa).

C2H2-type zinc fingers lie at residues 4 to 27 (RCCFEGCGKSFPRRAKLSDHLNTH), 33 to 55 (YKCDMCEKSYMKNGHLSVHKKKH), 85 to 108 (YKCGICGKRYRKRSWFDVHVESHH), and 119 to 142 (HVCEYCKFEFNKKSNLSTHVRSVH).

The sequence is that of Zinc finger C2H2 protein ECU03_0790 from Encephalitozoon cuniculi (strain GB-M1) (Microsporidian parasite).